The following is a 156-amino-acid chain: Transcription antitermination protein NusB (156 aa).

Belongs to the NusB family.

Its function is as follows. Involved in transcription antitermination. Required for transcription of ribosomal RNA (rRNA) genes. Binds specifically to the boxA antiterminator sequence of the ribosomal RNA (rrn) operons. In Rickettsia rickettsii (strain Iowa), this protein is Transcription antitermination protein NusB.